The sequence spans 361 residues: Myricetin 3-O-methyltransferase 3 (361 aa).

Aspartate 229 is a binding site for S-adenosyl-L-methionine. Residue histidine 267 is the Proton acceptor of the active site.

It belongs to the class I-like SAM-binding methyltransferase superfamily. Cation-independent O-methyltransferase family. Homodimer. Mainly expressed in leaves secreting glandular trichomes types 1 and 4 and, to a lesser extent, in storage trichomes type 6.

The catalysed reaction is kaempferol + S-adenosyl-L-methionine = 3-O-methylkaempferol + S-adenosyl-L-homocysteine + H(+). It carries out the reaction quercetin + S-adenosyl-L-methionine = 3',4',5,7-tetrahydroxy-3-methoxyflavone + S-adenosyl-L-homocysteine + H(+). The enzyme catalyses myricetin + S-adenosyl-L-methionine = 3-O-methylmyricetin + S-adenosyl-L-homocysteine + H(+). It catalyses the reaction kaempferide + S-adenosyl-L-methionine = 3,4'-O-dimethylkaempferol + S-adenosyl-L-homocysteine + H(+). The catalysed reaction is isorhamnetin + S-adenosyl-L-methionine = 3,3'-O-dimethylquercetin + S-adenosyl-L-homocysteine + H(+). It carries out the reaction rhamnetin + S-adenosyl-L-methionine = 3',4',5-trihydroxy-3,7-dimethoxyflavone + S-adenosyl-L-homocysteine + H(+). The enzyme catalyses laricitrin + S-adenosyl-L-methionine = 3,3'-O-dimethylmyricetin + S-adenosyl-L-homocysteine + H(+). It catalyses the reaction syringetin + S-adenosyl-L-methionine = 3,3',5'-O-trimethylmyricetin + S-adenosyl-L-homocysteine + H(+). The protein operates within flavonoid metabolism. Functionally, flavonoid 3-O-methyltransferase involved in the biosynthesis of polymethoxylated flavonoids natural products such as myricetin derivatives, aroma compounds possessing antioxidant properties and exhibiting pharmacological activities such as anti-carcinogen, anti-viral, anti-thrombotic, anti-diabetic, anti-atherosclerotic, and anti-inflammatory effects. Catalyzes S-adenosylmethionine-dependent regioselective 3-O-methylation of flavonoids; active on various hydroxylated flavonoid substrates. Active with myricetin, quercetin, kaempferol, 4'-methyl kaempferol (kaempferide), 3'-methyl quercetin (isorhamnetin), 7-methyl quercetin (rhamnetin), 3'-methyl myricetin (laricitrin) and 3',5'-dimethyl myricetin (syringetin), thus producing 3-methyl myricetin, 3-methyl quercetin, 3-methyl kaempferol, 4',3-methyl kaempferol, 3',3-methyl quercetin, 7,3-dimethyl quercetin, 3',3-dimethyl myricetin and 3',5',3-dimethyl myricetin, respectively. Inactive with flavonol substrates methylated at the 3-hydroxyl position such as 3-O-methyl quercetin. The sequence is that of Myricetin 3-O-methyltransferase 3 from Solanum habrochaites (Wild tomato).